The chain runs to 116 residues: Large ribosomal subunit protein bL19 (116 aa).

It belongs to the bacterial ribosomal protein bL19 family.

Functionally, this protein is located at the 30S-50S ribosomal subunit interface and may play a role in the structure and function of the aminoacyl-tRNA binding site. This chain is Large ribosomal subunit protein bL19, found in Pasteurella multocida (strain Pm70).